Consider the following 194-residue polypeptide: Peptidyl-tRNA hydrolase (194 aa).

Y17 contacts tRNA. Residue H22 is the Proton acceptor of the active site. Residues Y68, N70, and N116 each coordinate tRNA.

This sequence belongs to the PTH family. Monomer.

It is found in the cytoplasm. The enzyme catalyses an N-acyl-L-alpha-aminoacyl-tRNA + H2O = an N-acyl-L-amino acid + a tRNA + H(+). In terms of biological role, hydrolyzes ribosome-free peptidyl-tRNAs (with 1 or more amino acids incorporated), which drop off the ribosome during protein synthesis, or as a result of ribosome stalling. Functionally, catalyzes the release of premature peptidyl moieties from peptidyl-tRNA molecules trapped in stalled 50S ribosomal subunits, and thus maintains levels of free tRNAs and 50S ribosomes. This Pseudomonas fluorescens (strain SBW25) protein is Peptidyl-tRNA hydrolase.